The chain runs to 218 residues: Ribosomal RNA small subunit methyltransferase J (218 aa).

S-adenosyl-L-methionine-binding positions include 55-56, 71-72, and Asp-123; these read RD and ER.

The protein belongs to the methyltransferase superfamily. RsmJ family.

Its subcellular location is the cytoplasm. It catalyses the reaction guanosine(1516) in 16S rRNA + S-adenosyl-L-methionine = N(2)-methylguanosine(1516) in 16S rRNA + S-adenosyl-L-homocysteine + H(+). Functionally, specifically methylates the guanosine in position 1516 of 16S rRNA. The protein is Ribosomal RNA small subunit methyltransferase J of Rhodopseudomonas palustris (strain HaA2).